Here is a 426-residue protein sequence, read N- to C-terminus: Lipoyl synthase, mitochondrial (426 aa).

The N-terminal 29 residues, 1–29 (MASPAPLQRLQAPLRRSLARAAVLSSRTY), are a transit peptide targeting the mitochondrion. Over residues 27–42 (RTYATIPSPSDPGLTQ) the composition is skewed to polar residues. Residues 27-61 (RTYATIPSPSDPGLTQSSPSPAASTTPAKKAPRPS) are disordered. The segment covering 43–55 (SSPSPAASTTPAK) has biased composition (low complexity). Positions 140, 145, 151, 171, 175, 178, and 388 each coordinate [4Fe-4S] cluster. The region spanning 154-377 (GNDKSAATAT…KQRALDMGFL (224 aa)) is the Radical SAM core domain.

Belongs to the radical SAM superfamily. Lipoyl synthase family. Requires [4Fe-4S] cluster as cofactor.

It localises to the mitochondrion. The enzyme catalyses [[Fe-S] cluster scaffold protein carrying a second [4Fe-4S](2+) cluster] + N(6)-octanoyl-L-lysyl-[protein] + 2 oxidized [2Fe-2S]-[ferredoxin] + 2 S-adenosyl-L-methionine + 4 H(+) = [[Fe-S] cluster scaffold protein] + N(6)-[(R)-dihydrolipoyl]-L-lysyl-[protein] + 4 Fe(3+) + 2 hydrogen sulfide + 2 5'-deoxyadenosine + 2 L-methionine + 2 reduced [2Fe-2S]-[ferredoxin]. Its pathway is protein modification; protein lipoylation via endogenous pathway; protein N(6)-(lipoyl)lysine from octanoyl-[acyl-carrier-protein]: step 2/2. In terms of biological role, catalyzes the radical-mediated insertion of two sulfur atoms into the C-6 and C-8 positions of the octanoyl moiety bound to the lipoyl domains of lipoate-dependent enzymes, thereby converting the octanoylated domains into lipoylated derivatives. This is Lipoyl synthase, mitochondrial from Podospora anserina (strain S / ATCC MYA-4624 / DSM 980 / FGSC 10383) (Pleurage anserina).